Consider the following 37-residue polypeptide: Large ribosomal subunit protein bL36 (37 aa).

The protein belongs to the bacterial ribosomal protein bL36 family.

The sequence is that of Large ribosomal subunit protein bL36 from Geobacter sp. (strain M21).